The chain runs to 133 residues: Fluoride-specific ion channel FluC (133 aa).

A run of 4 helical transmembrane segments spans residues leucine 12–isoleucine 32, tryptophan 41–leucine 61, isoleucine 76–phenylalanine 96, and methionine 104–alanine 124. The Na(+) site is built by glycine 81 and threonine 84.

Belongs to the fluoride channel Fluc/FEX (TC 1.A.43) family.

It localises to the cell inner membrane. It carries out the reaction fluoride(in) = fluoride(out). Na(+) is not transported, but it plays an essential structural role and its presence is essential for fluoride channel function. Its function is as follows. Fluoride-specific ion channel. Important for reducing fluoride concentration in the cell, thus reducing its toxicity. The polypeptide is Fluoride-specific ion channel FluC (Xanthomonas axonopodis pv. citri (strain 306)).